Consider the following 628-residue polypeptide: Probable potassium transport system protein Kup 1 (628 aa).

12 helical membrane-spanning segments follow: residues 18-38 (ITLAALGVVYGDLGTSPLYAL), 58-78 (IVSLFFWTIMIVVSFKYVLLV), 106-126 (ALLMLLGLVGVGLFIGDAVIT), 141-161 (ITPELAPFVLPITLTVLVILF), 175-195 (FGPIMLLWFGVLAALGAYEIV), 219-239 (IAFITLGAVVLCVTGTEALYA), 253-273 (WGSLVMPALLLNYFGQGALLL), 285-305 (LLAPSWLAFPLLILATLATVI), 343-363 (IYLPLVNWLLLGGIIIVIIWF), 371-391 (AAYGIAVTGTMALTTLLLMVV), 401-421 (WLIALICAPLLLVDVTFFAAN), and 425-445 (FLAGGWLPILFALLAIIVMTT).

This sequence belongs to the HAK/KUP transporter (TC 2.A.72) family.

It localises to the cell inner membrane. It carries out the reaction K(+)(in) + H(+)(in) = K(+)(out) + H(+)(out). Its function is as follows. Transport of potassium into the cell. Likely operates as a K(+):H(+) symporter. In Aeromonas hydrophila subsp. hydrophila (strain ATCC 7966 / DSM 30187 / BCRC 13018 / CCUG 14551 / JCM 1027 / KCTC 2358 / NCIMB 9240 / NCTC 8049), this protein is Probable potassium transport system protein Kup 1.